The chain runs to 316 residues: tRNA pseudouridine synthase B (316 aa).

The active-site Nucleophile is the D38. Residues 238 to 312 (YPEVIVKSSA…PVCVLARQAG (75 aa)) enclose the PUA domain.

The protein belongs to the pseudouridine synthase TruB family. Type 1 subfamily.

The enzyme catalyses uridine(55) in tRNA = pseudouridine(55) in tRNA. Functionally, responsible for synthesis of pseudouridine from uracil-55 in the psi GC loop of transfer RNAs. This is tRNA pseudouridine synthase B from Pelotomaculum thermopropionicum (strain DSM 13744 / JCM 10971 / SI).